We begin with the raw amino-acid sequence, 204 residues long: Thymidylate kinase (204 aa).

11–18 (GLDKSGKT) is an ATP binding site.

The protein belongs to the thymidylate kinase family.

The enzyme catalyses dTMP + ATP = dTDP + ADP. The protein operates within pyrimidine metabolism; dTTP biosynthesis. This Camelus protein is Thymidylate kinase (TMK).